A 477-amino-acid polypeptide reads, in one-letter code: ATP-dependent rRNA helicase RRP3 (477 aa).

The tract at residues methionine 1–alanine 22 is disordered. Residues lysine 65–serine 93 carry the Q motif motif. Residues isoleucine 96 to valine 267 enclose the Helicase ATP-binding domain. Alanine 109 to threonine 116 serves as a coordination point for ATP. Positions aspartate 215 to aspartate 218 match the DEAD box motif. The 145-residue stretch at tyrosine 294–leucine 438 folds into the Helicase C-terminal domain. The disordered stretch occupies residues alanine 452–arginine 477.

The protein belongs to the DEAD box helicase family. DDX47/RRP3 subfamily. Interacts with the SSU processome.

The protein resides in the nucleus. It carries out the reaction ATP + H2O = ADP + phosphate + H(+). In terms of biological role, ATP-dependent rRNA helicase required for pre-ribosomal RNA processing. Involved in the maturation of the 35S-pre-rRNA and to its cleavage to mature 18S rRNA. The sequence is that of ATP-dependent rRNA helicase RRP3 from Debaryomyces hansenii (strain ATCC 36239 / CBS 767 / BCRC 21394 / JCM 1990 / NBRC 0083 / IGC 2968) (Yeast).